A 108-amino-acid chain; its full sequence is Nucleoid-associated protein Mpe_A2533 (108 aa).

A disordered region spans residues 86-108; that stretch reads TSEEKMGKLTAGMPLPPGMKLPF. Residues 99 to 108 are compositionally biased toward pro residues; it reads PLPPGMKLPF.

It belongs to the YbaB/EbfC family. Homodimer.

Its subcellular location is the cytoplasm. It localises to the nucleoid. In terms of biological role, binds to DNA and alters its conformation. May be involved in regulation of gene expression, nucleoid organization and DNA protection. The polypeptide is Nucleoid-associated protein Mpe_A2533 (Methylibium petroleiphilum (strain ATCC BAA-1232 / LMG 22953 / PM1)).